Reading from the N-terminus, the 413-residue chain is MGGGNLNIEEIIEKVANGEIKFYQVEKYVNGDKRLATEIRRKALEKRLGIKLHHIGYYSIDPNELIGRNIENMIGVVQIPMGVAGPLKINGEYAKGEFYIPLATTEGALVASVNRGCSALTEAGGVVTTLIDDKMTRAPLIRCPNARRAREVAKWVEENLDYLQEKAVSKVTRHGKLRGVKPFIVGNNLYLRFEFETGDAMGMNMVTIASEEIMKVIEEEFPDVRYLALSGNLCVDKKPNAVNFILGRGKTVIAEAVVPRKIVEKKLKTTPELIAEVNYFKNLVGSAQAGSYGFNAHFANIVGAIFLATGQDEAQITEGAHGITIAEVTPDGDLYISITMPSLEIGTVGGGTRVPSQREALEIMGVAGGGDPPGINAKKFAEIVAGAVLAGELSLLAAIAAKHLARAHKMLGR.

Catalysis depends on charge relay system residues Glu106 and Asp312. His408 functions as the Proton donor in the catalytic mechanism.

It belongs to the HMG-CoA reductase family.

It carries out the reaction (R)-mevalonate + 2 NADP(+) + CoA = (3S)-3-hydroxy-3-methylglutaryl-CoA + 2 NADPH + 2 H(+). Its pathway is metabolic intermediate biosynthesis; (R)-mevalonate biosynthesis; (R)-mevalonate from acetyl-CoA: step 3/3. Functionally, converts HMG-CoA to mevalonate. The protein is 3-hydroxy-3-methylglutaryl-coenzyme A reductase (hmgA) of Pyrococcus horikoshii (strain ATCC 700860 / DSM 12428 / JCM 9974 / NBRC 100139 / OT-3).